The primary structure comprises 95 residues: Aspartyl/glutamyl-tRNA(Asn/Gln) amidotransferase subunit C (95 aa).

Belongs to the GatC family. Heterotrimer of A, B and C subunits.

The enzyme catalyses L-glutamyl-tRNA(Gln) + L-glutamine + ATP + H2O = L-glutaminyl-tRNA(Gln) + L-glutamate + ADP + phosphate + H(+). The catalysed reaction is L-aspartyl-tRNA(Asn) + L-glutamine + ATP + H2O = L-asparaginyl-tRNA(Asn) + L-glutamate + ADP + phosphate + 2 H(+). Functionally, allows the formation of correctly charged Asn-tRNA(Asn) or Gln-tRNA(Gln) through the transamidation of misacylated Asp-tRNA(Asn) or Glu-tRNA(Gln) in organisms which lack either or both of asparaginyl-tRNA or glutaminyl-tRNA synthetases. The reaction takes place in the presence of glutamine and ATP through an activated phospho-Asp-tRNA(Asn) or phospho-Glu-tRNA(Gln). The protein is Aspartyl/glutamyl-tRNA(Asn/Gln) amidotransferase subunit C of Halorhodospira halophila (strain DSM 244 / SL1) (Ectothiorhodospira halophila (strain DSM 244 / SL1)).